We begin with the raw amino-acid sequence, 469 residues long: Glutamate--tRNA ligase (469 aa).

The short motif at 9-19 (PSPTGFLHVGG) is the 'HIGH' region element. Zn(2+)-binding residues include cysteine 98, cysteine 100, cysteine 125, and aspartate 127. The short motif at 236–240 (KLSKR) is the 'KMSKS' region element. An ATP-binding site is contributed by lysine 239.

It belongs to the class-I aminoacyl-tRNA synthetase family. Glutamate--tRNA ligase type 1 subfamily. As to quaternary structure, monomer. Zn(2+) serves as cofactor.

The protein localises to the cytoplasm. The enzyme catalyses tRNA(Glu) + L-glutamate + ATP = L-glutamyl-tRNA(Glu) + AMP + diphosphate. Its function is as follows. Catalyzes the attachment of glutamate to tRNA(Glu) in a two-step reaction: glutamate is first activated by ATP to form Glu-AMP and then transferred to the acceptor end of tRNA(Glu). The sequence is that of Glutamate--tRNA ligase from Shewanella putrefaciens (strain CN-32 / ATCC BAA-453).